Reading from the N-terminus, the 347-residue chain is Eukaryotic translation initiation factor 3 subunit H (347 aa).

Residues V6 to T149 enclose the MPN domain. The tract at residues S136–G155 is disordered. Polar residues predominate over residues T138–G155.

It belongs to the eIF-3 subunit H family. In terms of assembly, component of the eukaryotic translation initiation factor 3 (eIF-3) complex.

The protein localises to the cytoplasm. Its function is as follows. Component of the eukaryotic translation initiation factor 3 (eIF-3) complex, which is involved in protein synthesis of a specialized repertoire of mRNAs and, together with other initiation factors, stimulates binding of mRNA and methionyl-tRNAi to the 40S ribosome. The eIF-3 complex specifically targets and initiates translation of a subset of mRNAs involved in cell proliferation. This chain is Eukaryotic translation initiation factor 3 subunit H, found in Yarrowia lipolytica (strain CLIB 122 / E 150) (Yeast).